Reading from the N-terminus, the 150-residue chain is 3-dehydroquinate dehydratase (150 aa).

The Proton acceptor role is filled by tyrosine 26. Asparagine 77, histidine 83, and aspartate 90 together coordinate substrate. Histidine 103 acts as the Proton donor in catalysis. Residues 104–105 and arginine 114 each bind substrate; that span reads LS.

The protein belongs to the type-II 3-dehydroquinase family. Homododecamer.

It carries out the reaction 3-dehydroquinate = 3-dehydroshikimate + H2O. The protein operates within metabolic intermediate biosynthesis; chorismate biosynthesis; chorismate from D-erythrose 4-phosphate and phosphoenolpyruvate: step 3/7. Catalyzes a trans-dehydration via an enolate intermediate. This Klebsiella pneumoniae (strain 342) protein is 3-dehydroquinate dehydratase.